The sequence spans 93 residues: Small ribosomal subunit protein uS19 (93 aa).

The protein belongs to the universal ribosomal protein uS19 family.

Its function is as follows. Protein S19 forms a complex with S13 that binds strongly to the 16S ribosomal RNA. The chain is Small ribosomal subunit protein uS19 from Clostridioides difficile (strain 630) (Peptoclostridium difficile).